The chain runs to 219 residues: Ribonuclease HII (219 aa).

An RNase H type-2 domain is found at 30-219 (RVIAGIDEAG…VREHVTCPSS (190 aa)). Positions 36, 37, and 128 each coordinate a divalent metal cation.

This sequence belongs to the RNase HII family. Mn(2+) serves as cofactor. Mg(2+) is required as a cofactor.

Its subcellular location is the cytoplasm. It carries out the reaction Endonucleolytic cleavage to 5'-phosphomonoester.. Functionally, endonuclease that specifically degrades the RNA of RNA-DNA hybrids. The polypeptide is Ribonuclease HII (Pelobacter propionicus (strain DSM 2379 / NBRC 103807 / OttBd1)).